Here is a 318-residue protein sequence, read N- to C-terminus: Ferric enterobactin-binding periplasmic protein FepB (318 aa).

An N-terminal signal peptide occupies residues 1–26 (MRLAPLYRNALLLTGLLLSGIAAVQA). Residues 48-318 (RIVSTSVTLT…QVLDRLKALF (271 aa)) form the Fe/B12 periplasmic-binding domain.

It belongs to the bacterial solute-binding protein 8 family. In terms of assembly, the complex is composed of two ATP-binding proteins (FepC), two transmembrane proteins (FepD and FepG) and a solute-binding protein (FepB).

The protein resides in the periplasm. In terms of biological role, part of the ABC transporter complex FepBDGC involved in ferric enterobactin uptake. Binds ferric enterobactin. The polypeptide is Ferric enterobactin-binding periplasmic protein FepB (fepB) (Escherichia coli O6:H1 (strain CFT073 / ATCC 700928 / UPEC)).